We begin with the raw amino-acid sequence, 555 residues long: Formate--tetrahydrofolate ligase (555 aa).

An ATP-binding site is contributed by 64 to 71 (TPAGEGKT).

The protein belongs to the formate--tetrahydrofolate ligase family.

The catalysed reaction is (6S)-5,6,7,8-tetrahydrofolate + formate + ATP = (6R)-10-formyltetrahydrofolate + ADP + phosphate. Its pathway is one-carbon metabolism; tetrahydrofolate interconversion. The polypeptide is Formate--tetrahydrofolate ligase (Dinoroseobacter shibae (strain DSM 16493 / NCIMB 14021 / DFL 12)).